The sequence spans 1466 residues: Adhesion G protein-coupled receptor L1 (1466 aa).

An N-terminal signal peptide occupies residues 1–28 (MARLAAALWSLCVTTVLVTSATQGLSRA). Over 29–852 (GLPFGLMRRE…EIYQGRINEL (824 aa)) the chain is Extracellular. An SUEL-type lectin domain is found at 40-129 (ACEGYPIELR…KYLEVQYDCV (90 aa)). Intrachain disulfides connect Cys-41-Cys-71, Cys-50-Cys-128, Cys-83-Cys-115, Cys-96-Cys-102, and Cys-135-Cys-317. Residue Glu-42 coordinates alpha-L-rhamnose. Asn-98 is a glycosylation site (N-linked (GlcNAc...) asparagine). Residue 117–120 (GTYK) coordinates alpha-L-rhamnose. An Olfactomedin-like domain is found at 134-393 (VCPGTLQKVL…VVRYSLEFGP (260 aa)). The tract at residues 395–463 (DPSAGPATSP…APAPSTRRPP (69 aa)) is disordered. Residues 400–436 (PATSPPLSTTTTARPTPLTSTASPAATTPLRRAPLTT) show a composition bias toward low complexity. Positions 448–463 (DLPPATAPAPSTRRPP) are enriched in pro residues. 2 disulfide bridges follow: Cys-475–Cys-510 and Cys-498–Cys-527. 6 N-linked (GlcNAc...) asparagine glycosylation sites follow: Asn-526, Asn-635, Asn-736, Asn-795, Asn-800, and Asn-821. A GAIN-B domain is found at 664–845 (PARFLAAKQN…AVLMAHREIY (182 aa)). Intrachain disulfides connect Cys-796/Cys-827 and Cys-815/Cys-829. The tract at residues 796–845 (CSFWNYSERSMLGYWSTQGCRLVESNKTHTTCACSHLTNFAVLMAHREIY) is GPS. Residues 853–873 (LLSVITWVGIVISLVCLAICI) form a helical membrane-spanning segment. Topologically, residues 874–887 (STFCFLRGLQTDRN) are cytoplasmic. A helical transmembrane segment spans residues 888–908 (TIHKNLCINLFLAELLFLVGI). Residues 909–914 (DKTQYE) are Extracellular-facing. The chain crosses the membrane as a helical span at residues 915–935 (VACPIFAGLLHYFFLAAFSWL). Residues 936–958 (CLEGVHLYLLLVEVFESEYSRTK) are Cytoplasmic-facing. Residues 959–979 (YYYLGGYCFPALVVGIAAAID) form a helical membrane-spanning segment. At 980–996 (YRSYGTEKACWLRVDNY) the chain is on the extracellular side. A helical transmembrane segment spans residues 997–1017 (FIWSFIGPVSFVIVVNLVFLM). The Cytoplasmic segment spans residues 1018 to 1044 (VTLHKMIRSSSVLKPDSSRLDNIKSWA). A helical transmembrane segment spans residues 1045–1065 (LGAIALLFLLGLTWAFGLLFI). Residues 1066–1069 (NKES) are Extracellular-facing. A helical transmembrane segment spans residues 1070 to 1090 (VVMAYLFTTFNAFQGVFIFVF). Residues 1091–1466 (HCALQKKVHK…DGQMQLVTSL (376 aa)) are Cytoplasmic-facing. An Omega-N-methylarginine modification is found at Arg-1188. Ser-1214 carries the post-translational modification Phosphoserine. Disordered stretches follow at residues 1242–1267 (FNNS…RGRN), 1288–1319 (RGAS…GPGS), 1352–1421 (ESES…SRPP), and 1443–1466 (YLAA…VTSL). Pro residues predominate over residues 1296 to 1307 (GPPPEPPVPPVP). Ser-1319 is subject to Phosphoserine. Pro residues predominate over residues 1400–1412 (ALPPPPPAPPGPP). 2 positions are modified to phosphoserine: Ser-1448 and Ser-1465.

This sequence belongs to the G-protein coupled receptor 2 family. Adhesion G-protein coupled receptor (ADGR) subfamily. In terms of assembly, forms a heterodimer, consisting of a large extracellular region (p120) non-covalently linked to a seven-transmembrane moiety (p85). Interacts with syntaxin and with proteins of the SHANK family via the PDZ domain. Interacts (via extracellular domain) with FLRT1, FLRT2 and FLRT3 (via extracellular domain). Post-translationally, autoproteolytically cleaved into 2 subunits, an extracellular subunit and a seven-transmembrane subunit. This proteolytic processing takes place early in the biosynthetic pathway, either in the endoplasmic reticulum or in the early compartment of the Golgi apparatus.

The protein resides in the cell membrane. The protein localises to the cell projection. Its subcellular location is the axon. It localises to the growth cone. It is found in the synapse. The protein resides in the presynaptic cell membrane. The protein localises to the synaptosome. Its function is as follows. Calcium-independent receptor of high affinity for alpha-latrotoxin, an excitatory neurotoxin present in black widow spider venom which triggers massive exocytosis from neurons and neuroendocrine cells. Receptor for TENM2 that mediates heterophilic synaptic cell-cell contact and postsynaptic specialization. Receptor probably implicated in the regulation of exocytosis. The polypeptide is Adhesion G protein-coupled receptor L1 (Mus musculus (Mouse)).